Here is a 366-residue protein sequence, read N- to C-terminus: MGESIMKKAKEDAPSVDDSKKLAIEQAMSQIEKQFGKGSIMKLGSDSAKQTVQVIPSGSLDLDIALGIGGYPIGRIVEIYGPESSGKTTLTLSAIAEAQKRGGVAAFIDAEHALDPSYAKKLGVNIDELLVSQPDNGEEALEICESLVRSNAIDLIVIDSVAALVPKAEIEGDMGDSHMGLQARLMSQALRKLTGTIAKSKTVVIFINQIRMKIGVMFGSPETTTGGNALKFYCSVRLDIRKIETIKEKEESVGNRVRVKVVKNKCAPPFKQAEFDIIFNAGISREGSLVDLGVKHDIIHKAGAWYSYNTEKIGQGKEAAKEYLKNNPEIALTIENMVRDLNSLPLLVQENNKKSRKEEKLEQAAG.

81-88 (GPESSGKT) contributes to the ATP binding site.

This sequence belongs to the RecA family.

It is found in the cytoplasm. Its function is as follows. Can catalyze the hydrolysis of ATP in the presence of single-stranded DNA, the ATP-dependent uptake of single-stranded DNA by duplex DNA, and the ATP-dependent hybridization of homologous single-stranded DNAs. It interacts with LexA causing its activation and leading to its autocatalytic cleavage. The polypeptide is Protein RecA (Leptospira interrogans serogroup Icterohaemorrhagiae serovar copenhageni (strain Fiocruz L1-130)).